Reading from the N-terminus, the 474-residue chain is Bifunctional protein HldE (474 aa).

Residues 1–318 form a ribokinase region; the sequence is MKLSMPRFDQ…RAIQREEGSE (318 aa). 194 to 197 contacts ATP; that stretch reads NLSE. The active site involves D263. Residues 343-474 form a cytidylyltransferase region; it reads FTNGCFDILH…AIVEKIRGQG (132 aa).

The protein in the N-terminal section; belongs to the carbohydrate kinase PfkB family. It in the C-terminal section; belongs to the cytidylyltransferase family. As to quaternary structure, homodimer.

The catalysed reaction is D-glycero-beta-D-manno-heptose 7-phosphate + ATP = D-glycero-beta-D-manno-heptose 1,7-bisphosphate + ADP + H(+). It carries out the reaction D-glycero-beta-D-manno-heptose 1-phosphate + ATP + H(+) = ADP-D-glycero-beta-D-manno-heptose + diphosphate. Its pathway is nucleotide-sugar biosynthesis; ADP-L-glycero-beta-D-manno-heptose biosynthesis; ADP-L-glycero-beta-D-manno-heptose from D-glycero-beta-D-manno-heptose 7-phosphate: step 1/4. It participates in nucleotide-sugar biosynthesis; ADP-L-glycero-beta-D-manno-heptose biosynthesis; ADP-L-glycero-beta-D-manno-heptose from D-glycero-beta-D-manno-heptose 7-phosphate: step 3/4. Its function is as follows. Catalyzes the phosphorylation of D-glycero-D-manno-heptose 7-phosphate at the C-1 position to selectively form D-glycero-beta-D-manno-heptose-1,7-bisphosphate. In terms of biological role, catalyzes the ADP transfer from ATP to D-glycero-beta-D-manno-heptose 1-phosphate, yielding ADP-D-glycero-beta-D-manno-heptose. In Pseudomonas syringae pv. tomato (strain ATCC BAA-871 / DC3000), this protein is Bifunctional protein HldE.